The primary structure comprises 450 residues: Methionine aminopeptidase 2 (450 aa).

The interval 1–99 (MAVQAPEVDK…LFPNSQYPEG (99 aa)) is disordered. Residues 33–49 (GDEDAENEESDEDDDQG) are compositionally biased toward acidic residues. Basic residues predominate over residues 60-75 (KKKRKRKPKKKKKKGV). Residue His-200 coordinates substrate. A divalent metal cation is bound by residues Asp-220, Asp-231, and His-300. His-308 contributes to the substrate binding site. A divalent metal cation is bound by residues Glu-336 and Glu-431.

The protein belongs to the peptidase M24A family. Methionine aminopeptidase eukaryotic type 2 subfamily. Co(2+) is required as a cofactor. It depends on Zn(2+) as a cofactor. The cofactor is Mn(2+). Fe(2+) serves as cofactor.

The protein localises to the cytoplasm. The catalysed reaction is Release of N-terminal amino acids, preferentially methionine, from peptides and arylamides.. Its function is as follows. Cotranslationally removes the N-terminal methionine from nascent proteins. The N-terminal methionine is often cleaved when the second residue in the primary sequence is small and uncharged (Met-Ala-, Cys, Gly, Pro, Ser, Thr, or Val). The chain is Methionine aminopeptidase 2 from Uncinocarpus reesii (strain UAMH 1704).